A 234-amino-acid polypeptide reads, in one-letter code: 3,4-dihydroxy-2-butanone 4-phosphate synthase (234 aa).

D-ribulose 5-phosphate contacts are provided by residues 39 to 40 (RE), aspartate 44, 152 to 156 (RRGHT), and glutamate 176. Residue glutamate 40 participates in Mg(2+) binding. Histidine 155 contacts Mg(2+).

The protein belongs to the DHBP synthase family. As to quaternary structure, homodimer. The cofactor is Mg(2+). Requires Mn(2+) as cofactor.

The enzyme catalyses D-ribulose 5-phosphate = (2S)-2-hydroxy-3-oxobutyl phosphate + formate + H(+). It functions in the pathway cofactor biosynthesis; riboflavin biosynthesis; 2-hydroxy-3-oxobutyl phosphate from D-ribulose 5-phosphate: step 1/1. Catalyzes the conversion of D-ribulose 5-phosphate to formate and 3,4-dihydroxy-2-butanone 4-phosphate. In Pelobacter propionicus (strain DSM 2379 / NBRC 103807 / OttBd1), this protein is 3,4-dihydroxy-2-butanone 4-phosphate synthase.